The primary structure comprises 215 residues: Ribonuclease T (215 aa).

The 175-residue stretch at 20-194 (VVIDVETAGF…YDTERTAVLF (175 aa)) folds into the Exonuclease domain. Residues aspartate 23, glutamate 25, histidine 181, and aspartate 186 each contribute to the Mg(2+) site. The Proton donor/acceptor role is filled by histidine 181.

It belongs to the RNase T family. Homodimer. Mg(2+) serves as cofactor.

Functionally, trims short 3' overhangs of a variety of RNA species, leaving a one or two nucleotide 3' overhang. Responsible for the end-turnover of tRNA: specifically removes the terminal AMP residue from uncharged tRNA (tRNA-C-C-A). Also appears to be involved in tRNA biosynthesis. This is Ribonuclease T from Shigella dysenteriae serotype 1 (strain Sd197).